A 372-amino-acid polypeptide reads, in one-letter code: Oxysterol-binding protein 3 (372 aa).

Positions 1 to 10 (MGKSDRKLTE) are enriched in basic and acidic residues. Residues 1 to 25 (MGKSDRKLTEENSIENGVKPGKLTE) are disordered.

This sequence belongs to the OSBP family.

This is Oxysterol-binding protein 3 (osbC) from Dictyostelium discoideum (Social amoeba).